Here is a 469-residue protein sequence, read N- to C-terminus: ATP synthase subunit beta (469 aa).

ATP is bound at residue 155 to 162 (GGAGVGKT).

It belongs to the ATPase alpha/beta chains family. F-type ATPases have 2 components, CF(1) - the catalytic core - and CF(0) - the membrane proton channel. CF(1) has five subunits: alpha(3), beta(3), gamma(1), delta(1), epsilon(1). CF(0) has three main subunits: a(1), b(2) and c(9-12). The alpha and beta chains form an alternating ring which encloses part of the gamma chain. CF(1) is attached to CF(0) by a central stalk formed by the gamma and epsilon chains, while a peripheral stalk is formed by the delta and b chains.

The protein resides in the cell inner membrane. The catalysed reaction is ATP + H2O + 4 H(+)(in) = ADP + phosphate + 5 H(+)(out). Functionally, produces ATP from ADP in the presence of a proton gradient across the membrane. The catalytic sites are hosted primarily by the beta subunits. This chain is ATP synthase subunit beta, found in Thermosipho melanesiensis (strain DSM 12029 / CIP 104789 / BI429).